Here is a 285-residue protein sequence, read N- to C-terminus: Sulfotransferase 2A1 (285 aa).

3'-phosphoadenylyl sulfate-binding residues include lysine 44, serine 45, glycine 46, threonine 47, asparagine 48, and tryptophan 49. The active-site Proton acceptor is histidine 99. Residues arginine 121, serine 129, tyrosine 184, serine 218, methionine 223, arginine 247, lysine 248, and glycine 249 each contribute to the 3'-phosphoadenylyl sulfate site.

This sequence belongs to the sulfotransferase 1 family. Homodimer. As to expression, highly expressed in liver.

The protein resides in the cytoplasm. The enzyme catalyses an alcohol + 3'-phosphoadenylyl sulfate = an alkyl sulfate + adenosine 3',5'-bisphosphate + H(+). The catalysed reaction is taurolithocholate + 3'-phosphoadenylyl sulfate = taurolithocholate 3-sulfate + adenosine 3',5'-bisphosphate + H(+). It catalyses the reaction pregnenolone + 3'-phosphoadenylyl sulfate = pregnenolone sulfate + adenosine 3',5'-bisphosphate + H(+). It carries out the reaction 3beta-hydroxyandrost-5-en-17-one + 3'-phosphoadenylyl sulfate = dehydroepiandrosterone 3-sulfate + adenosine 3',5'-bisphosphate + H(+). The enzyme catalyses lithocholate + 3'-phosphoadenylyl sulfate = lithocholate sulfate + adenosine 3',5'-bisphosphate + H(+). The catalysed reaction is (24S)-hydroxycholesterol + 3'-phosphoadenylyl sulfate = (24S)-hydroxycholesterol 24-sulfate + adenosine 3',5'-bisphosphate + H(+). It catalyses the reaction (24S)-hydroxycholesterol + 3'-phosphoadenylyl sulfate = (24S)-hydroxycholesterol 3-sulfate + adenosine 3',5'-bisphosphate + H(+). It carries out the reaction (24S)-hydroxycholesterol 24-sulfate + 3'-phosphoadenylyl sulfate = (24S)-hydroxycholesterol 3,24-disulfate + adenosine 3',5'-bisphosphate + H(+). The enzyme catalyses androsterone + 3'-phosphoadenylyl sulfate = androsterone 3alpha-sulfate + adenosine 3',5'-bisphosphate + H(+). In terms of biological role, sulfotransferase that utilizes 3'-phospho-5'-adenylyl sulfate (PAPS) as sulfonate donor to catalyze the sulfonation of steroids and bile acids in the liver and adrenal glands. Mediates the sulfation of a wide range of steroids and sterols, including pregnenolone, androsterone, DHEA, bile acids, cholesterol and as well many xenobiotics that contain alcohol and phenol functional groups. Sulfonation increases the water solubility of most compounds, and therefore their renal excretion, but it can also result in bioactivation to form active metabolites. Plays an important role in maintening steroid and lipid homeostasis. Plays a key role in bile acid metabolism. In addition, catalyzes the metabolic activation of potent carcinogenic polycyclic arylmethanols. This is Sulfotransferase 2A1 (Sult2a1) from Mus musculus (Mouse).